The primary structure comprises 177 residues: uncharacterized protein (177 aa).

The next 4 helical transmembrane spans lie at I4–L24, I33–I53, I80–L100, and M115–V135.

The protein localises to the cell membrane. This is an uncharacterized protein from Bacillus subtilis (strain 168).